The sequence spans 321 residues: Carbonic anhydrase, chloroplastic (321 aa).

The N-terminal 100 residues, 1–100, are a transit peptide targeting the chloroplast; it reads MSTASINSCL…AAARVDQITA (100 aa).

The protein belongs to the beta-class carbonic anhydrase family. As to quaternary structure, homohexamer.

The protein localises to the plastid. Its subcellular location is the chloroplast stroma. The enzyme catalyses hydrogencarbonate + H(+) = CO2 + H2O. In terms of biological role, reversible hydration of carbon dioxide. The sequence is that of Carbonic anhydrase, chloroplastic from Nicotiana tabacum (Common tobacco).